The following is a 449-amino-acid chain: Gamma-glutamyl phosphate reductase (449 aa).

This sequence belongs to the gamma-glutamyl phosphate reductase family.

It localises to the cytoplasm. It catalyses the reaction L-glutamate 5-semialdehyde + phosphate + NADP(+) = L-glutamyl 5-phosphate + NADPH + H(+). It functions in the pathway amino-acid biosynthesis; L-proline biosynthesis; L-glutamate 5-semialdehyde from L-glutamate: step 2/2. Catalyzes the NADPH-dependent reduction of L-glutamate 5-phosphate into L-glutamate 5-semialdehyde and phosphate. The product spontaneously undergoes cyclization to form 1-pyrroline-5-carboxylate. The polypeptide is Gamma-glutamyl phosphate reductase (Methanococcoides burtonii (strain DSM 6242 / NBRC 107633 / OCM 468 / ACE-M)).